The following is a 328-amino-acid chain: 4-hydroxythreonine-4-phosphate dehydrogenase (328 aa).

Threonine 125 lines the substrate pocket. A divalent metal cation-binding residues include histidine 160, histidine 203, and histidine 269. Residues lysine 277, asparagine 286, and arginine 295 each contribute to the substrate site.

The protein belongs to the PdxA family. In terms of assembly, homodimer. The cofactor is a divalent metal cation.

The protein resides in the cytoplasm. It catalyses the reaction 4-(phosphooxy)-L-threonine + NAD(+) = 3-amino-2-oxopropyl phosphate + CO2 + NADH. It functions in the pathway cofactor biosynthesis; pyridoxine 5'-phosphate biosynthesis; pyridoxine 5'-phosphate from D-erythrose 4-phosphate: step 4/5. Catalyzes the NAD(P)-dependent oxidation of 4-(phosphooxy)-L-threonine (HTP) into 2-amino-3-oxo-4-(phosphooxy)butyric acid which spontaneously decarboxylates to form 3-amino-2-oxopropyl phosphate (AHAP). The polypeptide is 4-hydroxythreonine-4-phosphate dehydrogenase (Synechococcus sp. (strain RCC307)).